Here is a 495-residue protein sequence, read N- to C-terminus: Aspartyl/glutamyl-tRNA(Asn/Gln) amidotransferase subunit B (495 aa).

It belongs to the GatB/GatE family. GatB subfamily. As to quaternary structure, heterotrimer of A, B and C subunits.

The enzyme catalyses L-glutamyl-tRNA(Gln) + L-glutamine + ATP + H2O = L-glutaminyl-tRNA(Gln) + L-glutamate + ADP + phosphate + H(+). It carries out the reaction L-aspartyl-tRNA(Asn) + L-glutamine + ATP + H2O = L-asparaginyl-tRNA(Asn) + L-glutamate + ADP + phosphate + 2 H(+). In terms of biological role, allows the formation of correctly charged Asn-tRNA(Asn) or Gln-tRNA(Gln) through the transamidation of misacylated Asp-tRNA(Asn) or Glu-tRNA(Gln) in organisms which lack either or both of asparaginyl-tRNA or glutaminyl-tRNA synthetases. The reaction takes place in the presence of glutamine and ATP through an activated phospho-Asp-tRNA(Asn) or phospho-Glu-tRNA(Gln). This is Aspartyl/glutamyl-tRNA(Asn/Gln) amidotransferase subunit B from Crocosphaera subtropica (strain ATCC 51142 / BH68) (Cyanothece sp. (strain ATCC 51142)).